Here is a 152-residue protein sequence, read N- to C-terminus: Nuclear cap-binding protein subunit 2 (152 aa).

MRNA-binding positions include Tyr8, Tyr31, 100–104 (RTDWD), 111–115 (RQFGR), and 121–122 (QV). The RRM domain maps to 28–106 (TTLYVGNMSF…RIIRTDWDAG (79 aa)).

This sequence belongs to the RRM NCBP2 family. As to quaternary structure, component of the nuclear cap-binding complex (CBC), a heterodimer composed of Cbp80 and Cbp20 that interacts with m7GpppG-capped RNA.

It localises to the nucleus. Component of the cap-binding complex (CBC), which binds co-transcriptionally to the 5' cap of pre-mRNAs and is involved in various processes such as pre-mRNA splicing and RNA-mediated gene silencing (RNAi). The CBC complex is involved in miRNA-mediated RNA interference and is required for primary microRNAs (miRNAs) processing. Also involved in innate immunity via the short interfering RNAs (siRNAs) processing machinery by restricting the viral RNA production. In the CBC complex, Cbp20 recognizes and binds capped RNAs (m7GpppG-capped RNA) but requires Cbp80 to stabilize the movement of its N-terminal loop and lock the CBC into a high affinity cap-binding state with the cap structure. This Ixodes scapularis (Black-legged tick) protein is Nuclear cap-binding protein subunit 2 (Cbp20).